A 365-amino-acid polypeptide reads, in one-letter code: Spermidine/putrescine import ATP-binding protein PotA (365 aa).

In terms of domain architecture, ABC transporter spans 9 to 239 (IRLTNVTKSY…PINHFVANFI (231 aa)). Position 41–48 (41–48 (GPSGCGKT)) interacts with ATP.

The protein belongs to the ABC transporter superfamily. Spermidine/putrescine importer (TC 3.A.1.11.1) family. As to quaternary structure, the complex is composed of two ATP-binding proteins (PotA), two transmembrane proteins (PotB and PotC) and a solute-binding protein (PotD).

The protein localises to the cell membrane. The enzyme catalyses ATP + H2O + polyamine-[polyamine-binding protein]Side 1 = ADP + phosphate + polyamineSide 2 + [polyamine-binding protein]Side 1.. Part of the ABC transporter complex PotABCD involved in spermidine/putrescine import. Responsible for energy coupling to the transport system. This Lactiplantibacillus plantarum (strain ATCC BAA-793 / NCIMB 8826 / WCFS1) (Lactobacillus plantarum) protein is Spermidine/putrescine import ATP-binding protein PotA.